We begin with the raw amino-acid sequence, 407 residues long: Serpin-Z2 (407 aa).

The segment at 1 to 28 (MDSKRKNQELSTSETADPSLSKTNKKQK) is disordered. A compositionally biased stretch (polar residues) spans 9–22 (ELSTSETADPSLSK). Residues 344–368 (GTEAAAATTVVVVTGSCLWEPKKKI) form an RCL region.

This sequence belongs to the serpin family.

In terms of biological role, probable serine protease inhibitor. This is Serpin-Z2 from Arabidopsis thaliana (Mouse-ear cress).